A 513-amino-acid chain; its full sequence is Cytochrome P450 monooxygenase CYP3 (513 aa).

The tract at residues 1 to 21 (MLPRSLGHSTSELSPPFDGPN) is disordered. Residue cysteine 451 participates in heme binding.

This sequence belongs to the cytochrome P450 family. Requires heme as cofactor.

The protein operates within secondary metabolite biosynthesis. Functionally, cytochrome P450 monooxygenase; part of the gene cluster that mediates the biosynthesis of a tyrosine-derived cytochalasan acting as a fungal signal recognized by resistant rice plants and leads to avirulence in Pi33 resistant rice cultivars. The first step in the pathway is catalyzed by the hybrid PKS-NRPS ACE1, assisted by the enoyl reductase RAP1, that are responsible for fusion of the tyrosine precursor and the polyketide backbone. The polyketide synthase module (PKS) of ACE1 is responsible for the synthesis of the polyketide backbone and the downstream nonribosomal peptide synthetase (NRPS) amidates the carboxyl end of the polyketide with the tyrosine precursor. Because ACE1 lacks a designated enoylreductase (ER) domain, the required activity is provided the enoyl reductase RAP1. Reduction by the hydrolyase ORFZ, followed by dehydration and intra-molecular Diels-Alder cyclization by the Diels-Alderase ORF3 then yield the required isoindolone-fused macrocycle. A number of oxidative steps catalyzed by the tailoring enzymes identified within the cluster, including cytochrome P450 monooxygenases CYP1 to CYP4, the FAD-linked oxidoreductase OXR2 and the short-chain dehydrogenase/reductase OXR1, are further required to afford the final cytochalasans that confer avirulence and which have still to be identified. The monooxygenase CYP1 has been shown to be a site-selective C-18 hydroxylase whereas the function of CYP3 is the site-selective epoxidation of the C-6/C-7 olefin that is present in some intermediate compounds. Finally, SYN2 and RAP2 are not required for avirulence in Pi33 resistant rice cultivars. The protein is Cytochrome P450 monooxygenase CYP3 of Pyricularia oryzae (strain 70-15 / ATCC MYA-4617 / FGSC 8958) (Rice blast fungus).